Here is a 137-residue protein sequence, read N- to C-terminus: Transcription antitermination protein NusB (137 aa).

The protein belongs to the NusB family.

Involved in transcription antitermination. Required for transcription of ribosomal RNA (rRNA) genes. Binds specifically to the boxA antiterminator sequence of the ribosomal RNA (rrn) operons. This Clavibacter michiganensis subsp. michiganensis (strain NCPPB 382) protein is Transcription antitermination protein NusB.